A 370-amino-acid polypeptide reads, in one-letter code: Cytochrome b (370 aa).

The next 4 membrane-spanning stretches (helical) occupy residues 25–45, 69–90, 105–125, and 170–190; these read FGSM…FLAV, WLMQ…YIHI, WLSG…GYVL, and FFAL…LHIM. Heme b-binding residues include His75 and His89. The heme b site is built by His174 and His188. Residue His193 participates in a ubiquinone binding. Transmembrane regions (helical) follow at residues 218 to 238, 280 to 300, 312 to 332, and 339 to 358; these read YKDL…VSFF, LGGA…PFTH, FMQL…WTAT, and FTTI…ISNP.

Belongs to the cytochrome b family. In terms of assembly, the cytochrome bc1 complex contains 3 respiratory subunits (MT-CYB, CYC1 and UQCRFS1), 2 core proteins (UQCRC1 and UQCRC2) and probably 6 low-molecular weight proteins. Heme b is required as a cofactor.

It localises to the mitochondrion inner membrane. In terms of biological role, component of the ubiquinol-cytochrome c reductase complex (complex III or cytochrome b-c1 complex) that is part of the mitochondrial respiratory chain. The b-c1 complex mediates electron transfer from ubiquinol to cytochrome c. Contributes to the generation of a proton gradient across the mitochondrial membrane that is then used for ATP synthesis. This Chilabothrus fordii (Ford's boa) protein is Cytochrome b (MT-CYB).